A 327-amino-acid polypeptide reads, in one-letter code: GTPase Obg (327 aa).

Residues methionine 1–leucine 159 form the Obg domain. Residues alanine 160 to isoleucine 327 enclose the OBG-type G domain. Residues glycine 166–serine 173, phenylalanine 191–isoleucine 195, aspartate 213–glycine 216, asparagine 280–glutamate 283, and serine 309–serine 311 contribute to the ATP site. Residues serine 173 and threonine 193 each coordinate Mg(2+).

This sequence belongs to the TRAFAC class OBG-HflX-like GTPase superfamily. OBG GTPase family. In terms of assembly, monomer. Requires Mg(2+) as cofactor.

It localises to the cytoplasm. Functionally, an essential GTPase which binds GTP, GDP and possibly (p)ppGpp with moderate affinity, with high nucleotide exchange rates and a fairly low GTP hydrolysis rate. Plays a role in control of the cell cycle, stress response, ribosome biogenesis and in those bacteria that undergo differentiation, in morphogenesis control. This is GTPase Obg from Prochlorococcus marinus subsp. pastoris (strain CCMP1986 / NIES-2087 / MED4).